The primary structure comprises 202 residues: Na(+)-translocating NADH-quinone reductase subunit E (202 aa).

Helical transmembrane passes span 11 to 31 (SIFIENLALAFFLGMCTYLAV), 39 to 59 (MGLGVAVIVVMTITVPVNNLL), 79 to 99 (LTFVGLISYIGVIAAIVQILE), 114 to 134 (GIFLPLITVNCAILGASLFMV), 144 to 164 (VTFGFGSGVGWALAIVLLAGI), and 180 to 200 (LGITFIVVGLMSFGFLSFSGI).

The protein belongs to the NqrDE/RnfAE family. As to quaternary structure, composed of six subunits; NqrA, NqrB, NqrC, NqrD, NqrE and NqrF.

The protein resides in the cell inner membrane. It catalyses the reaction a ubiquinone + n Na(+)(in) + NADH + H(+) = a ubiquinol + n Na(+)(out) + NAD(+). NQR complex catalyzes the reduction of ubiquinone-1 to ubiquinol by two successive reactions, coupled with the transport of Na(+) ions from the cytoplasm to the periplasm. NqrA to NqrE are probably involved in the second step, the conversion of ubisemiquinone to ubiquinol. The sequence is that of Na(+)-translocating NADH-quinone reductase subunit E from Maridesulfovibrio salexigens (strain ATCC 14822 / DSM 2638 / NCIMB 8403 / VKM B-1763) (Desulfovibrio salexigens).